The chain runs to 222 residues: MQFFIDTANLDEIRAAAELGVLDGVTTNPSLIAKVAGSSKPFTWQAFKDHIAAICEIVDGPVSAEVTALDANGMIDQGEELADIDGKVVIKCPVTLEGLKAISYFDENDIMTNATLVFSPNQALLAAKAGATYVSPFVGRLDDVSTNGMELIRQIVTIYRNYDFITEVIVASVRHSQHVVEAAMIGADIATIPFNVIKQLISHPLTEAGLKKFTEDAAIIQM.

K91 serves as the catalytic Schiff-base intermediate with substrate.

This sequence belongs to the transaldolase family. Type 3B subfamily.

It localises to the cytoplasm. The enzyme catalyses D-sedoheptulose 7-phosphate + D-glyceraldehyde 3-phosphate = D-erythrose 4-phosphate + beta-D-fructose 6-phosphate. The protein operates within carbohydrate degradation; pentose phosphate pathway; D-glyceraldehyde 3-phosphate and beta-D-fructose 6-phosphate from D-ribose 5-phosphate and D-xylulose 5-phosphate (non-oxidative stage): step 2/3. In terms of biological role, transaldolase is important for the balance of metabolites in the pentose-phosphate pathway. In Chlorobium chlorochromatii (strain CaD3), this protein is Probable transaldolase.